A 66-amino-acid polypeptide reads, in one-letter code: Large ribosomal subunit protein bL33c (66 aa).

It belongs to the bacterial ribosomal protein bL33 family.

It localises to the plastid. The protein resides in the chloroplast. The sequence is that of Large ribosomal subunit protein bL33c from Welwitschia mirabilis (Tree tumbo).